We begin with the raw amino-acid sequence, 529 residues long: Bifunctional purine biosynthesis protein PurH (529 aa).

Positions 1–148 constitute an MGS-like domain; that stretch reads MQQRRPVRRA…KNHKDVAIVV (148 aa).

This sequence belongs to the PurH family.

The enzyme catalyses (6R)-10-formyltetrahydrofolate + 5-amino-1-(5-phospho-beta-D-ribosyl)imidazole-4-carboxamide = 5-formamido-1-(5-phospho-D-ribosyl)imidazole-4-carboxamide + (6S)-5,6,7,8-tetrahydrofolate. It carries out the reaction IMP + H2O = 5-formamido-1-(5-phospho-D-ribosyl)imidazole-4-carboxamide. The protein operates within purine metabolism; IMP biosynthesis via de novo pathway; 5-formamido-1-(5-phospho-D-ribosyl)imidazole-4-carboxamide from 5-amino-1-(5-phospho-D-ribosyl)imidazole-4-carboxamide (10-formyl THF route): step 1/1. It functions in the pathway purine metabolism; IMP biosynthesis via de novo pathway; IMP from 5-formamido-1-(5-phospho-D-ribosyl)imidazole-4-carboxamide: step 1/1. This is Bifunctional purine biosynthesis protein PurH from Salmonella enteritidis PT4 (strain P125109).